Reading from the N-terminus, the 314-residue chain is MTHKILPISIIYINKEMLNQRIDNFMRSKFKSVPKSMIYRIIRTGKIRINKKRIKPHYKLKIGDILKIPPIKILCDIKNTFFPLNHSTNLLNRILYEDSHLLIINKPSGIAVHGGSGLNFGVIEYFRKLRPLNKFLELVHRIDRDTSGVLILAKKRTSLVSLHEQLREKKIKKEYIALVHGLWPDHIKKISEPLLKIQFKNKQKMVLIDKKGKPSETYFQIKKKFSSSTLLSIIPKTGRTHQIRVHALHAGHPIFFDKRYGKNDLDADIKNNHKINRLLLHSSGVHFIHPKNGNKIYIKAPLDIDFQNYLNTII.

An S4 RNA-binding domain is found at 20–84 (QRIDNFMRSK…CDIKNTFFPL (65 aa)). Aspartate 143 is an active-site residue.

It belongs to the pseudouridine synthase RluA family.

The catalysed reaction is uridine(955/2504/2580) in 23S rRNA = pseudouridine(955/2504/2580) in 23S rRNA. Functionally, responsible for synthesis of pseudouridine from uracil at positions 955, 2504 and 2580 in 23S ribosomal RNA. This Buchnera aphidicola subsp. Acyrthosiphon pisum (strain APS) (Acyrthosiphon pisum symbiotic bacterium) protein is Ribosomal large subunit pseudouridine synthase C (rluC).